Here is a 291-residue protein sequence, read N- to C-terminus: N-acetylmannosamine kinase (291 aa).

Residues 5–12 (AIDIGGTK) and 132–139 (GVGGGVVS) contribute to the ATP site. The Zn(2+) site is built by His156, Cys166, Cys168, and Cys173.

It belongs to the ROK (NagC/XylR) family. NanK subfamily. As to quaternary structure, homodimer.

The enzyme catalyses an N-acyl-D-mannosamine + ATP = an N-acyl-D-mannosamine 6-phosphate + ADP + H(+). Its pathway is amino-sugar metabolism; N-acetylneuraminate degradation; D-fructose 6-phosphate from N-acetylneuraminate: step 2/5. In terms of biological role, catalyzes the phosphorylation of N-acetylmannosamine (ManNAc) to ManNAc-6-P. The protein is N-acetylmannosamine kinase of Escherichia coli (strain 55989 / EAEC).